The chain runs to 319 residues: Transaldolase (319 aa).

Residue Lys-126 is the Schiff-base intermediate with substrate of the active site.

The protein belongs to the transaldolase family. Type 1 subfamily. Homodimer.

It localises to the cytoplasm. The catalysed reaction is D-sedoheptulose 7-phosphate + D-glyceraldehyde 3-phosphate = D-erythrose 4-phosphate + beta-D-fructose 6-phosphate. The protein operates within carbohydrate degradation; pentose phosphate pathway; D-glyceraldehyde 3-phosphate and beta-D-fructose 6-phosphate from D-ribose 5-phosphate and D-xylulose 5-phosphate (non-oxidative stage): step 2/3. Functionally, transaldolase is important for the balance of metabolites in the pentose-phosphate pathway. The protein is Transaldolase of Bordetella avium (strain 197N).